The sequence spans 457 residues: Bifunctional protein GlmU (457 aa).

Residues 1 to 228 (MEGLVTLILA…SEEITGVNSR (228 aa)) form a pyrophosphorylase region. UDP-N-acetyl-alpha-D-glucosamine is bound by residues 9–12 (LAAG), K23, Q73, and 78–79 (GT). D102 serves as a coordination point for Mg(2+). UDP-N-acetyl-alpha-D-glucosamine-binding residues include G139, E154, N169, and N226. N226 contacts Mg(2+). Residues 229–249 (VQLFEAEKIMRKRINYRHMEN) form a linker region. The tract at residues 250-457 (GVTIVDPDTT…VQERIKKGRL (208 aa)) is N-acetyltransferase. UDP-N-acetyl-alpha-D-glucosamine contacts are provided by R331 and K349. Catalysis depends on H361, which acts as the Proton acceptor. The UDP-N-acetyl-alpha-D-glucosamine site is built by Y364 and N375. Residues 384-385 (NY), A421, and R438 contribute to the acetyl-CoA site.

This sequence in the N-terminal section; belongs to the N-acetylglucosamine-1-phosphate uridyltransferase family. The protein in the C-terminal section; belongs to the transferase hexapeptide repeat family. As to quaternary structure, homotrimer. Requires Mg(2+) as cofactor.

It localises to the cytoplasm. The catalysed reaction is alpha-D-glucosamine 1-phosphate + acetyl-CoA = N-acetyl-alpha-D-glucosamine 1-phosphate + CoA + H(+). It carries out the reaction N-acetyl-alpha-D-glucosamine 1-phosphate + UTP + H(+) = UDP-N-acetyl-alpha-D-glucosamine + diphosphate. Its pathway is nucleotide-sugar biosynthesis; UDP-N-acetyl-alpha-D-glucosamine biosynthesis; N-acetyl-alpha-D-glucosamine 1-phosphate from alpha-D-glucosamine 6-phosphate (route II): step 2/2. It participates in nucleotide-sugar biosynthesis; UDP-N-acetyl-alpha-D-glucosamine biosynthesis; UDP-N-acetyl-alpha-D-glucosamine from N-acetyl-alpha-D-glucosamine 1-phosphate: step 1/1. It functions in the pathway bacterial outer membrane biogenesis; LPS lipid A biosynthesis. Catalyzes the last two sequential reactions in the de novo biosynthetic pathway for UDP-N-acetylglucosamine (UDP-GlcNAc). The C-terminal domain catalyzes the transfer of acetyl group from acetyl coenzyme A to glucosamine-1-phosphate (GlcN-1-P) to produce N-acetylglucosamine-1-phosphate (GlcNAc-1-P), which is converted into UDP-GlcNAc by the transfer of uridine 5-monophosphate (from uridine 5-triphosphate), a reaction catalyzed by the N-terminal domain. This is Bifunctional protein GlmU from Thermoanaerobacter pseudethanolicus (strain ATCC 33223 / 39E) (Clostridium thermohydrosulfuricum).